We begin with the raw amino-acid sequence, 437 residues long: Eukaryotic peptide chain release factor subunit 1 (437 aa).

An NIKS motif; plays an important role in translational termination motif is present at residues asparagine 61–serine 64.

It belongs to the eukaryotic release factor 1 family. In terms of assembly, component of the eRF1-eRF3-GTP ternary complex, composed of ETF1/ERF1 and eRF3 (GSPT1/ERF3A or GSPT2/ERF3B) and GTP.

Its subcellular location is the cytoplasm. In terms of biological role, component of the eRF1-eRF3-GTP ternary complex, a ternary complex that mediates translation termination in response to the termination codons. The eRF1-eRF3-GTP complex binds to a stop codon in the ribosomal A-site. ETF1/ERF1 is responsible for stop codon recognition and inducing hydrolysis of peptidyl-tRNA. Following GTP hydrolysis, eRF3 (GSPT1/ERF3A or GSPT2/ERF3B) dissociates, permitting ETF1/eRF1 to accommodate fully in the A-site, followed by hydrolysis of peptidyl-tRNA. In Xenopus tropicalis (Western clawed frog), this protein is Eukaryotic peptide chain release factor subunit 1 (etf1).